The sequence spans 474 residues: Glycogen synthase (474 aa).

Lys-12 lines the ADP-alpha-D-glucose pocket.

Belongs to the glycosyltransferase 1 family. Bacterial/plant glycogen synthase subfamily.

It carries out the reaction [(1-&gt;4)-alpha-D-glucosyl](n) + ADP-alpha-D-glucose = [(1-&gt;4)-alpha-D-glucosyl](n+1) + ADP + H(+). The protein operates within glycan biosynthesis; glycogen biosynthesis. Its function is as follows. Synthesizes alpha-1,4-glucan chains using ADP-glucose. In Xanthomonas axonopodis pv. citri (strain 306), this protein is Glycogen synthase.